The following is a 263-amino-acid chain: MAWLSRVRGVSPVTRLAAIRRSFGSAAALEFDYDSDDEYLYGDDRRLAEPRLGLDGSGPDRGVQWVLMGAPGAWRHVFAERLSKLLEVPHISMGSLVRQELNPRSSLYKEIASAVNERKLVPKSVVFALLSKRLEEGYARGETGFILHGIPRTRFQAETLDQIAQIDLVVNLKCSEDHLVNRNETALPQQEFLGSMLHSPVAINARRESVGVYAQEVEEYYRKQRKLLDFHVGGATSADTWQGLLAALHLKQVNLTTSQKLTL.

Residues 1–30 (MAWLSRVRGVSPVTRLAAIRRSFGSAAALE) constitute a mitochondrion transit peptide. 72–77 (GAWRHV) lines the ATP pocket. An NMP region spans residues 92–121 (SMGSLVRQELNPRSSLYKEIASAVNERKLV). AMP contacts are provided by residues arginine 98, 119 to 121 (KLV), 149 to 152 (GIPR), glutamine 156, and arginine 206. Glycine 234 lines the ATP pocket.

This sequence belongs to the adenylate kinase family. As to quaternary structure, monomer.

Its subcellular location is the mitochondrion. The enzyme catalyses AMP + ATP = 2 ADP. Catalyzes the reversible transfer of the terminal phosphate group between ATP and AMP. Plays an important role in cellular energy homeostasis and in adenine nucleotide metabolism. In Arabidopsis thaliana (Mouse-ear cress), this protein is Probable adenylate kinase 7, mitochondrial.